Reading from the N-terminus, the 450-residue chain is Chromosomal replication initiator protein DnaA (450 aa).

The segment at 1-84 (MENIHDLWDR…AVKFIIPPNQ (84 aa)) is domain I, interacts with DnaA modulators. The interval 84–111 (QADEKLELPSSAKKQRKPYEEANDFPQS) is domain II. The interval 112–328 (MLNPKYTFDT…GALIRVVAYS (217 aa)) is domain III, AAA+ region. ATP contacts are provided by G156, G158, K159, and T160. A domain IV, binds dsDNA region spans residues 329-450 (SLINKEITAD…KEIQEKLKQL (122 aa)).

The protein belongs to the DnaA family. Oligomerizes as a right-handed, spiral filament on DNA at oriC.

It is found in the cytoplasm. Plays an essential role in the initiation and regulation of chromosomal replication. ATP-DnaA binds to the origin of replication (oriC) to initiate formation of the DNA replication initiation complex once per cell cycle. Binds the DnaA box (a 9 base pair repeat at the origin) and separates the double-stranded (ds)DNA. Forms a right-handed helical filament on oriC DNA; dsDNA binds to the exterior of the filament while single-stranded (ss)DNA is stabiized in the filament's interior. The ATP-DnaA-oriC complex binds and stabilizes one strand of the AT-rich DNA unwinding element (DUE), permitting loading of DNA polymerase. After initiation quickly degrades to an ADP-DnaA complex that is not apt for DNA replication. Binds acidic phospholipids. The protein is Chromosomal replication initiator protein DnaA of Geobacillus thermodenitrificans (strain NG80-2).